The following is a 345-amino-acid chain: GTPase Obg (345 aa).

One can recognise an Obg domain in the interval 1 to 159 (MHFLDQAKIF…MWVWLRLKLL (159 aa)). The tract at residues 121–142 (GDGGRGNASYKTSTNRAPRQHG) is disordered. Residues 160 to 327 (ADCGLVGLPN…VLDKIIEILG (168 aa)) enclose the OBG-type G domain. GTP-binding positions include 166-173 (GLPNAGKS), 191-195 (FTTIR), 212-215 (DIPG), 279-282 (NKID), and 308-310 (SGA). Ser173 and Thr193 together coordinate Mg(2+).

It belongs to the TRAFAC class OBG-HflX-like GTPase superfamily. OBG GTPase family. As to quaternary structure, monomer. Requires Mg(2+) as cofactor.

The protein localises to the cytoplasm. In terms of biological role, an essential GTPase which binds GTP, GDP and possibly (p)ppGpp with moderate affinity, with high nucleotide exchange rates and a fairly low GTP hydrolysis rate. Plays a role in control of the cell cycle, stress response, ribosome biogenesis and in those bacteria that undergo differentiation, in morphogenesis control. In Rhizorhabdus wittichii (strain DSM 6014 / CCUG 31198 / JCM 15750 / NBRC 105917 / EY 4224 / RW1) (Sphingomonas wittichii), this protein is GTPase Obg.